A 552-amino-acid chain; its full sequence is Dihydroxy-acid dehydratase (552 aa).

C46 is a binding site for [2Fe-2S] cluster. D78 is a binding site for Mg(2+). Residue C119 coordinates [2Fe-2S] cluster. Mg(2+)-binding residues include D120 and K121. At K121 the chain carries N6-carboxylysine. Residue C191 participates in [2Fe-2S] cluster binding. Position 442 (E442) interacts with Mg(2+). Catalysis depends on S468, which acts as the Proton acceptor.

Belongs to the IlvD/Edd family. As to quaternary structure, homodimer. [2Fe-2S] cluster is required as a cofactor. Requires Mg(2+) as cofactor.

It carries out the reaction (2R)-2,3-dihydroxy-3-methylbutanoate = 3-methyl-2-oxobutanoate + H2O. The enzyme catalyses (2R,3R)-2,3-dihydroxy-3-methylpentanoate = (S)-3-methyl-2-oxopentanoate + H2O. The protein operates within amino-acid biosynthesis; L-isoleucine biosynthesis; L-isoleucine from 2-oxobutanoate: step 3/4. It participates in amino-acid biosynthesis; L-valine biosynthesis; L-valine from pyruvate: step 3/4. Its function is as follows. Functions in the biosynthesis of branched-chain amino acids. Catalyzes the dehydration of (2R,3R)-2,3-dihydroxy-3-methylpentanoate (2,3-dihydroxy-3-methylvalerate) into 2-oxo-3-methylpentanoate (2-oxo-3-methylvalerate) and of (2R)-2,3-dihydroxy-3-methylbutanoate (2,3-dihydroxyisovalerate) into 2-oxo-3-methylbutanoate (2-oxoisovalerate), the penultimate precursor to L-isoleucine and L-valine, respectively. This Picrophilus torridus (strain ATCC 700027 / DSM 9790 / JCM 10055 / NBRC 100828 / KAW 2/3) protein is Dihydroxy-acid dehydratase.